A 356-amino-acid chain; its full sequence is Heparan sulfate 2-O-sulfotransferase 1 (356 aa).

Residues 1–11 (MGLLRIMMPPK) lie on the Cytoplasmic side of the membrane. Residues 12–28 (LQLLAVLTFGVLMLFLE) traverse the membrane as a helical; Signal-anchor for type II membrane protein segment. Residues 24 to 51 (MLFLENQIQNLEESREKLERAIARHEVR) are a coiled coil. At 29–356 (NQIQNLEESR…FYEKIYPKSN (328 aa)) the chain is on the lumenal side. 6 residues coordinate adenosine 3',5'-bisphosphate: K83, T84, A85, S86, T87, and S88. N-linked (GlcNAc...) asparagine glycans are attached at residues N108 and N127. Active-site residues include H140 and H142. Positions 164 and 172 each coordinate adenosine 3',5'-bisphosphate. Intrachain disulfides connect C201/C209 and C222/C228. Adenosine 3',5'-bisphosphate is bound by residues Y279, S285, T290, and K293.

Belongs to the sulfotransferase 3 family. As to quaternary structure, homotrimer.

The protein localises to the golgi apparatus membrane. Functionally, catalyzes the transfer of a sulfo group from 3'-phospho-5'-adenylyl sulfate (PAPS) to the 2-OH position of iduronic acid (IdoA) or glucuronic acid (GlcA) within the heparan sulfate (HS) chain and participates in HS biosynthesis. The sequence is that of Heparan sulfate 2-O-sulfotransferase 1 from Xenopus laevis (African clawed frog).